The following is a 152-amino-acid chain: Peptide deformylase (152 aa).

2 residues coordinate Fe cation: Cys-88 and His-130. Residue Glu-131 is part of the active site. Residue His-134 participates in Fe cation binding.

Belongs to the polypeptide deformylase family. Fe(2+) is required as a cofactor.

It carries out the reaction N-terminal N-formyl-L-methionyl-[peptide] + H2O = N-terminal L-methionyl-[peptide] + formate. Its function is as follows. Removes the formyl group from the N-terminal Met of newly synthesized proteins. Requires at least a dipeptide for an efficient rate of reaction. N-terminal L-methionine is a prerequisite for activity but the enzyme has broad specificity at other positions. In Carboxydothermus hydrogenoformans (strain ATCC BAA-161 / DSM 6008 / Z-2901), this protein is Peptide deformylase.